A 201-amino-acid polypeptide reads, in one-letter code: dITP/XTP pyrophosphatase (201 aa).

Residue 7–12 (SNNAHK) coordinates substrate. Residue Asp-72 is the Proton acceptor of the active site. Position 72 (Asp-72) interacts with Mg(2+). Substrate contacts are provided by residues Ser-73, 154-157 (FGYD), Lys-177, and 182-183 (HR).

This sequence belongs to the HAM1 NTPase family. As to quaternary structure, homodimer. The cofactor is Mg(2+).

It catalyses the reaction XTP + H2O = XMP + diphosphate + H(+). The enzyme catalyses dITP + H2O = dIMP + diphosphate + H(+). It carries out the reaction ITP + H2O = IMP + diphosphate + H(+). Its function is as follows. Pyrophosphatase that catalyzes the hydrolysis of nucleoside triphosphates to their monophosphate derivatives, with a high preference for the non-canonical purine nucleotides XTP (xanthosine triphosphate), dITP (deoxyinosine triphosphate) and ITP. Seems to function as a house-cleaning enzyme that removes non-canonical purine nucleotides from the nucleotide pool, thus preventing their incorporation into DNA/RNA and avoiding chromosomal lesions. The protein is dITP/XTP pyrophosphatase of Leuconostoc mesenteroides subsp. mesenteroides (strain ATCC 8293 / DSM 20343 / BCRC 11652 / CCM 1803 / JCM 6124 / NCDO 523 / NBRC 100496 / NCIMB 8023 / NCTC 12954 / NRRL B-1118 / 37Y).